A 298-amino-acid polypeptide reads, in one-letter code: Probable tRNA(His) guanylyltransferase (298 aa).

Residues D58, G59, and D105 each coordinate Mg(2+). Residues 58–63 and 104–105 contribute to the GTP site; these read DGRNFH and SD.

Belongs to the tRNA(His) guanylyltransferase family. In terms of assembly, homotetramer. Interacts with MFN1 and MFN2; functions as a guanyl-nucleotide exchange factor/GEF for MFN2 and also probably MFN1. It depends on Mg(2+) as a cofactor.

Its subcellular location is the cytoplasm. It localises to the mitochondrion. The enzyme catalyses a 5'-end ribonucleotide-tRNA(His) + GTP + ATP + H2O = a 5'-end phospho-guanosine-ribonucleotide-tRNA(His) + AMP + 2 diphosphate + H(+). Its function is as follows. Adds a GMP to the 5'-end of tRNA(His) after transcription and RNase P cleavage. This step is essential for proper recognition of the tRNA and for the fidelity of protein synthesis. Also functions as a guanyl-nucleotide exchange factor/GEF for the MFN1 and MFN2 mitofusins thereby regulating mitochondrial fusion. By regulating both mitochondrial dynamics and bioenergetic function, it contributes to cell survival following oxidative stress. This Mus musculus (Mouse) protein is Probable tRNA(His) guanylyltransferase (Thg1l).